The chain runs to 198 residues: ATP-dependent Clp protease proteolytic subunit (198 aa).

The active-site Nucleophile is the Ser103. His128 is a catalytic residue.

It belongs to the peptidase S14 family. Fourteen ClpP subunits assemble into 2 heptameric rings which stack back to back to give a disk-like structure with a central cavity, resembling the structure of eukaryotic proteasomes.

It is found in the cytoplasm. It carries out the reaction Hydrolysis of proteins to small peptides in the presence of ATP and magnesium. alpha-casein is the usual test substrate. In the absence of ATP, only oligopeptides shorter than five residues are hydrolyzed (such as succinyl-Leu-Tyr-|-NHMec, and Leu-Tyr-Leu-|-Tyr-Trp, in which cleavage of the -Tyr-|-Leu- and -Tyr-|-Trp bonds also occurs).. Cleaves peptides in various proteins in a process that requires ATP hydrolysis. Has a chymotrypsin-like activity. Plays a major role in the degradation of misfolded proteins. The chain is ATP-dependent Clp protease proteolytic subunit from Vesicomyosocius okutanii subsp. Calyptogena okutanii (strain HA).